Reading from the N-terminus, the 267-residue chain is tRNA pseudouridine synthase A (267 aa).

D53 serves as the catalytic Nucleophile. Position 114 (Y114) interacts with substrate.

The protein belongs to the tRNA pseudouridine synthase TruA family. As to quaternary structure, homodimer.

It carries out the reaction uridine(38/39/40) in tRNA = pseudouridine(38/39/40) in tRNA. Functionally, formation of pseudouridine at positions 38, 39 and 40 in the anticodon stem and loop of transfer RNAs. The sequence is that of tRNA pseudouridine synthase A from Chlamydia muridarum (strain MoPn / Nigg).